The chain runs to 316 residues: Homoserine kinase (316 aa).

Position 96-106 (96-106 (PHGRGLGSSGA)) interacts with ATP.

Belongs to the GHMP kinase family. Homoserine kinase subfamily.

The protein resides in the cytoplasm. The enzyme catalyses L-homoserine + ATP = O-phospho-L-homoserine + ADP + H(+). Its pathway is amino-acid biosynthesis; L-threonine biosynthesis; L-threonine from L-aspartate: step 4/5. In terms of biological role, catalyzes the ATP-dependent phosphorylation of L-homoserine to L-homoserine phosphate. This Clavibacter michiganensis subsp. michiganensis (strain NCPPB 382) protein is Homoserine kinase.